A 393-amino-acid chain; its full sequence is Chalcone synthase 1 (393 aa).

C166 is a catalytic residue.

This sequence belongs to the thiolase-like superfamily. Chalcone/stilbene synthases family.

It catalyses the reaction (E)-4-coumaroyl-CoA + 3 malonyl-CoA + 3 H(+) = 2',4,4',6'-tetrahydroxychalcone + 3 CO2 + 4 CoA. It participates in secondary metabolite biosynthesis; flavonoid biosynthesis. The primary product of this enzyme is 4,2',4',6'-tetrahydroxychalcone (also termed naringenin-chalcone or chalcone) which can under specific conditions spontaneously isomerize into naringenin. This is Chalcone synthase 1 (CHS1) from Ruta graveolens (Common rue).